Here is a 161-residue protein sequence, read N- to C-terminus: ATP synthase subunit b (161 aa).

Residues 2–22 (VIEWGTALYQLLAFAVLLLIL) traverse the membrane as a helical segment.

Belongs to the ATPase B chain family. In terms of assembly, F-type ATPases have 2 components, F(1) - the catalytic core - and F(0) - the membrane proton channel. F(1) has five subunits: alpha(3), beta(3), gamma(1), delta(1), epsilon(1). F(0) has three main subunits: a(1), b(2) and c(10-14). The alpha and beta chains form an alternating ring which encloses part of the gamma chain. F(1) is attached to F(0) by a central stalk formed by the gamma and epsilon chains, while a peripheral stalk is formed by the delta and b chains.

Its subcellular location is the cell membrane. F(1)F(0) ATP synthase produces ATP from ADP in the presence of a proton or sodium gradient. F-type ATPases consist of two structural domains, F(1) containing the extramembraneous catalytic core and F(0) containing the membrane proton channel, linked together by a central stalk and a peripheral stalk. During catalysis, ATP synthesis in the catalytic domain of F(1) is coupled via a rotary mechanism of the central stalk subunits to proton translocation. Its function is as follows. Component of the F(0) channel, it forms part of the peripheral stalk, linking F(1) to F(0). This chain is ATP synthase subunit b, found in Shouchella clausii (strain KSM-K16) (Alkalihalobacillus clausii).